A 534-amino-acid chain; its full sequence is H(+)/hexose cotransporter 1 (534 aa).

Over 1-21 (MAGGGVVVVSGRGLSTGDYRG) the chain is Cytoplasmic. The chain crosses the membrane as a helical span at residues 22–42 (GLTVYVVMVAFMAACGGLLLG). The Extracellular segment spans residues 43–87 (YDNGVTGGVVSLEAFEKKFFPDVWAKKQEVHEDSPYCTYDNAKLQ). A helical membrane pass occupies residues 88–108 (LFVSSLFLAGLVSCLFASWIT). The Cytoplasmic portion of the chain corresponds to 109 to 114 (RNWGRK). Residues 115–135 (VTMGIGGAFFVAGGLVNAFAQ) traverse the membrane as a helical segment. The Extracellular portion of the chain corresponds to 136–144 (DMAMLIVGR). The helical transmembrane segment at 145 to 165 (VLLGFGVGLGSQVVPQYLSEV) threads the bilayer. Residues 166–173 (APFSHRGM) lie on the Cytoplasmic side of the membrane. A helical membrane pass occupies residues 174-194 (LNIGYQLFVTIGILIAGLVNY). The Extracellular segment spans residues 195–204 (AVRDWENGWR). A helical transmembrane segment spans residues 205–225 (LSLGPAAAPGAILFLGSLVLP). Over 226 to 299 (ESPNFLVEKG…TSFVIQFFQQ (74 aa)) the chain is Cytoplasmic. A helical membrane pass occupies residues 300 to 322 (FTGINAIIFYVPVLFSSLGSANS). Topologically, residues 323-328 (AALLNT) are extracellular. Residues 329-349 (VVVGAVNVGSTLIAVMFSDKF) traverse the membrane as a helical segment. The Cytoplasmic segment spans residues 350–352 (GRR). Residues 353 to 373 (FLLIEGGIQCCLAMLTTGVVL) traverse the membrane as a helical segment. Topologically, residues 374 to 387 (AIEFAKYGTDPLPK) are extracellular. A helical membrane pass occupies residues 388–408 (AVASGILAVICIFISGFAWSW). At 409–433 (GPMGWLIPSEIFTLETRPAGTAVAV) the chain is on the cytoplasmic side. Residues 434 to 454 (VGNFLFSFVIGQAFVSMLCAM) traverse the membrane as a helical segment. Over 455–456 (EY) the chain is Extracellular. A helical transmembrane segment spans residues 457 to 477 (GVFLFFAGWLVIMVLCAIFLL). Over 478–534 (PETKGVPIERVQALYARHWFWNRVMGPAAAEVIAEDEKRVAAASAIIKEEELSKAMK) the chain is Cytoplasmic.

It belongs to the major facilitator superfamily. Sugar transporter (TC 2.A.1.1) family.

The protein resides in the membrane. Functionally, active uptake of hexoses. The chain is H(+)/hexose cotransporter 1 (HUP1) from Parachlorella kessleri (Green alga).